We begin with the raw amino-acid sequence, 476 residues long: UDP-N-acetylmuramoylalanine--D-glutamate ligase (476 aa).

122–128 (GSNAKST) is a binding site for ATP.

Belongs to the MurCDEF family.

It is found in the cytoplasm. It catalyses the reaction UDP-N-acetyl-alpha-D-muramoyl-L-alanine + D-glutamate + ATP = UDP-N-acetyl-alpha-D-muramoyl-L-alanyl-D-glutamate + ADP + phosphate + H(+). Its pathway is cell wall biogenesis; peptidoglycan biosynthesis. In terms of biological role, cell wall formation. Catalyzes the addition of glutamate to the nucleotide precursor UDP-N-acetylmuramoyl-L-alanine (UMA). The chain is UDP-N-acetylmuramoylalanine--D-glutamate ligase from Psychrobacter arcticus (strain DSM 17307 / VKM B-2377 / 273-4).